We begin with the raw amino-acid sequence, 507 residues long: Tryptamine 4-monooxygenase (507 aa).

An N-terminal signal peptide occupies residues 1–19 (MIVLLVSLVLAGCIYYANA). The interval 403-425 (PNPSEFRPERYLSSDGKPDPTVR) is disordered. Residues 408–425 (FRPERYLSSDGKPDPTVR) show a composition bias toward basic and acidic residues. Position 439 (C439) interacts with heme.

This sequence belongs to the cytochrome P450 family. It depends on heme as a cofactor.

The enzyme catalyses tryptamine + AH2 + O2 = 4-hydroxytryptamine + A + H2O. It functions in the pathway secondary metabolite biosynthesis. Functionally, tryptamine 4-monooxygenase; part of the gene cluster that mediates the biosynthesis of psilocybin, a psychotropic tryptamine-derived natural product. The first step in the pathway is the decarboxylation of L-tryptophan to tryptamine by the decarboxylase psiD. PsiD does not decarboxylate phenylalanine, tyrosine, or 5-hydroxy- L -tryptophan (5-HTP). 4-hydroxy-L-tryptophan is accepted as substrate by psiD as well. The cytochrome P450 monooxygenase psiH then converts tryptamine to 4-hydroxytryptamine. The kinase psiK catalyzes the 4-O-phosphorylation step by converting 4-hydroxytryptamine into norbaeocystin. The methyltransferase psiM then catalyzes iterative methyl transfer to the amino group of norbaeocystin to yield psilocybin via a monomethylated intermediate, baeocystin. This is Tryptamine 4-monooxygenase from Psilocybe cyanescens.